Reading from the N-terminus, the 416-residue chain is Phosphoglycerate kinase (416 aa).

(2R)-3-phosphoglycerate contacts are provided by Val23, Asp24, Phe25, Asn26, Gln38, Arg39, Ser62, His63, Gly65, Arg66, Leu121, Arg122, His169, and Arg170. Gly213 lines the ADP pocket. Gly213 is a binding site for CDP. Positions 214 and 215 each coordinate AMP. Ala214 provides a ligand contact to ATP. Residue Ala214 coordinates Mg(2+). Position 218 (Asp218) interacts with CDP. Residue Asp218 coordinates Mg(2+). Lys219 contacts AMP. Lys219 contributes to the ATP binding site. An ADP-binding site is contributed by Gly237. CDP is bound at residue Gly237. Gly238 and Gly312 together coordinate AMP. ATP contacts are provided by Gly238 and Gly312. CDP-binding residues include Gly337, Ala339, and Phe342. Phe342 provides a ligand contact to ADP. An AMP-binding site is contributed by Glu343. ATP is bound by residues Glu343, Asp374, and Thr375. Position 374 (Asp374) interacts with Mg(2+).

This sequence belongs to the phosphoglycerate kinase family. As to quaternary structure, monomer. Requires Mg(2+) as cofactor.

Its subcellular location is the cytoplasm. It is found in the mitochondrion. It carries out the reaction (2R)-3-phosphoglycerate + ATP = (2R)-3-phospho-glyceroyl phosphate + ADP. It functions in the pathway carbohydrate degradation; glycolysis; pyruvate from D-glyceraldehyde 3-phosphate: step 2/5. Its function is as follows. Catalyzes one of the two ATP producing reactions in the glycolytic pathway via the reversible conversion of 1,3-diphosphoglycerate to 3-phosphoglycerate. Both L- and D- forms of purine and pyrimidine nucleotides can be used as substrates, but the activity is much lower on pyrimidines. Negatively regulates the biosynthesis of acetyl-CoA from pyruvate in the mitochondrion. The chain is Phosphoglycerate kinase (PGK) from Funneliformis mosseae (Endomycorrhizal fungus).